The primary structure comprises 398 residues: Dual-specificity RNA methyltransferase RlmN (398 aa).

Glu119 acts as the Proton acceptor in catalysis. Residues 125–364 (EGDRATLCVS…TIVRKTRGDD (240 aa)) enclose the Radical SAM core domain. A disulfide bond links Cys132 and Cys369. Residues Cys139, Cys143, and Cys146 each coordinate [4Fe-4S] cluster. Residues 193 to 194 (GE), Ser225, 247 to 249 (SLH), and Asn326 contribute to the S-adenosyl-L-methionine site. Cys369 acts as the S-methylcysteine intermediate in catalysis.

The protein belongs to the radical SAM superfamily. RlmN family. [4Fe-4S] cluster is required as a cofactor.

The protein localises to the cytoplasm. It carries out the reaction adenosine(2503) in 23S rRNA + 2 reduced [2Fe-2S]-[ferredoxin] + 2 S-adenosyl-L-methionine = 2-methyladenosine(2503) in 23S rRNA + 5'-deoxyadenosine + L-methionine + 2 oxidized [2Fe-2S]-[ferredoxin] + S-adenosyl-L-homocysteine. The catalysed reaction is adenosine(37) in tRNA + 2 reduced [2Fe-2S]-[ferredoxin] + 2 S-adenosyl-L-methionine = 2-methyladenosine(37) in tRNA + 5'-deoxyadenosine + L-methionine + 2 oxidized [2Fe-2S]-[ferredoxin] + S-adenosyl-L-homocysteine. Specifically methylates position 2 of adenine 2503 in 23S rRNA and position 2 of adenine 37 in tRNAs. m2A2503 modification seems to play a crucial role in the proofreading step occurring at the peptidyl transferase center and thus would serve to optimize ribosomal fidelity. The chain is Dual-specificity RNA methyltransferase RlmN from Yersinia enterocolitica serotype O:8 / biotype 1B (strain NCTC 13174 / 8081).